The following is a 125-amino-acid chain: Translation initiation factor 5A (125 aa).

Lysine 36 is modified (hypusine).

Belongs to the eIF-5A family.

It is found in the cytoplasm. Functions by promoting the formation of the first peptide bond. This chain is Translation initiation factor 5A (eIF5A), found in Halorubrum lacusprofundi (strain ATCC 49239 / DSM 5036 / JCM 8891 / ACAM 34).